The primary structure comprises 194 residues: NADH-quinone oxidoreductase subunit B (194 aa).

The [4Fe-4S] cluster site is built by C73, C74, C138, and C168.

Belongs to the complex I 20 kDa subunit family. In terms of assembly, NDH-1 is composed of 14 different subunits. Subunits NuoB, C, D, E, F, and G constitute the peripheral sector of the complex. Requires [4Fe-4S] cluster as cofactor.

The protein resides in the cell inner membrane. It carries out the reaction a quinone + NADH + 5 H(+)(in) = a quinol + NAD(+) + 4 H(+)(out). Functionally, NDH-1 shuttles electrons from NADH, via FMN and iron-sulfur (Fe-S) centers, to quinones in the respiratory chain. The immediate electron acceptor for the enzyme in this species is believed to be ubiquinone. Couples the redox reaction to proton translocation (for every two electrons transferred, four hydrogen ions are translocated across the cytoplasmic membrane), and thus conserves the redox energy in a proton gradient. The chain is NADH-quinone oxidoreductase subunit B from Rhizobium johnstonii (strain DSM 114642 / LMG 32736 / 3841) (Rhizobium leguminosarum bv. viciae).